The primary structure comprises 122 residues: Large ribosomal subunit protein uL14 (122 aa).

Belongs to the universal ribosomal protein uL14 family. As to quaternary structure, part of the 50S ribosomal subunit. Forms a cluster with proteins L3 and L19. In the 70S ribosome, L14 and L19 interact and together make contacts with the 16S rRNA in bridges B5 and B8.

Its function is as follows. Binds to 23S rRNA. Forms part of two intersubunit bridges in the 70S ribosome. The polypeptide is Large ribosomal subunit protein uL14 (Lactobacillus gasseri (strain ATCC 33323 / DSM 20243 / BCRC 14619 / CIP 102991 / JCM 1131 / KCTC 3163 / NCIMB 11718 / NCTC 13722 / AM63)).